The chain runs to 155 residues: Reticulon-like protein B23 (155 aa).

The Reticulon domain occupies 1–155; it reads MGEMGKAIGL…LNRRNGEILD (155 aa). The next 2 helical transmembrane spans lie at 30-50 and 117-137; these read SLIS…GLLF and IISG…SMLF.

It is found in the endoplasmic reticulum membrane. The chain is Reticulon-like protein B23 (RTNLB23) from Arabidopsis thaliana (Mouse-ear cress).